Reading from the N-terminus, the 213-residue chain is MAIKVHGSPMSTATMRVAACLIEKELDFEFVPVDMASGEHKKHPYLSLNPFGQVPAFEDGDLKLFESRAITQYIAHVYADNGYQLILQDPKKMPSMSVWMEVEGQKFEPPATKLTWELGIKPIIGMTTDDAAVKESEAQLSKVLDIYETQLAESKYLGGDSFTLVDLHHIPNIYYLMSSKVKEVFDSRPRVSAWCADILARPAWVKGLEKLQK.

The GST N-terminal domain maps to 1–82; it reads MAIKVHGSPM…YIAHVYADNG (82 aa). Glutathione is bound by residues S11, 12-13, 40-41, 53-54, and 66-67; these read TA, HK, QV, and ES. One can recognise a GST C-terminal domain in the interval 89–213; that stretch reads DPKKMPSMSV…WVKGLEKLQK (125 aa).

Belongs to the GST superfamily. Phi family.

It carries out the reaction RX + glutathione = an S-substituted glutathione + a halide anion + H(+). Its function is as follows. Conjugation of reduced glutathione to a wide number of exogenous and endogenous hydrophobic electrophiles. The protein is Glutathione S-transferase PARB of Nicotiana tabacum (Common tobacco).